Consider the following 251-residue polypeptide: Pyruvate formate-lyase-activating enzyme (251 aa).

The 230-residue stretch at 15–244 folds into the Radical SAM core domain; it reads VDGPGLRYIL…KAAYRYVNFK (230 aa). [4Fe-4S] cluster is bound by residues cysteine 29, cysteine 33, and cysteine 36. S-adenosyl-L-methionine is bound by residues 35–37, glycine 79, 134–136, and histidine 207; these read YCH and DIK.

The protein belongs to the organic radical-activating enzymes family. It depends on [4Fe-4S] cluster as a cofactor.

Its subcellular location is the cytoplasm. It catalyses the reaction glycyl-[formate C-acetyltransferase] + reduced [flavodoxin] + S-adenosyl-L-methionine = glycin-2-yl radical-[formate C-acetyltransferase] + semiquinone [flavodoxin] + 5'-deoxyadenosine + L-methionine + H(+). Functionally, activation of pyruvate formate-lyase under anaerobic conditions by generation of an organic free radical, using S-adenosylmethionine and reduced flavodoxin as cosubstrates to produce 5'-deoxy-adenosine. The sequence is that of Pyruvate formate-lyase-activating enzyme (pflA) from Staphylococcus aureus (strain N315).